A 176-amino-acid polypeptide reads, in one-letter code: N-alpha-acetyltransferase 30 (176 aa).

Positions 3-159 (IVYKPLDIRN…DAFKLILPLT (157 aa)) constitute an N-acetyltransferase domain.

It belongs to the acetyltransferase family. MAK3 subfamily. As to quaternary structure, component of the N-terminal acetyltransferase C (NatC) complex, which is composed of MAK3, MAK10 and MAK31.

Its subcellular location is the cytoplasm. The protein localises to the nucleus. The catalysed reaction is N-terminal L-methionyl-L-leucyl-[protein] + acetyl-CoA = N-terminal N(alpha)-acetyl-L-methionyl-L-leucyl-[protein] + CoA + H(+). The enzyme catalyses N-terminal L-methionyl-L-isoleucyl-[protein] + acetyl-CoA = N-terminal N(alpha)-acetyl-L-methionyl-L-isoleucyl-[protein] + CoA + H(+). It carries out the reaction N-terminal L-methionyl-L-phenylalanyl-[protein] + acetyl-CoA = N-terminal N(alpha)-acetyl-L-methionyl-L-phenylalanyl-[protein] + CoA + H(+). It catalyses the reaction N-terminal L-methionyl-L-tryptophyl-[protein] + acetyl-CoA = N-terminal N(alpha)-acetyl-L-methionyl-L-tryptophyl-[protein] + CoA + H(+). The catalysed reaction is N-terminal L-methionyl-L-tyrosyl-[protein] + acetyl-CoA = N-terminal N(alpha)-acetyl-L-methionyl-L-tyrosyl-[protein] + CoA + H(+). Catalytic component of the NatC N-terminal acetyltransferase, which catalyzes acetylation of the N-terminus Met of L-A virus GAG protein and possibly GRH1. This is N-alpha-acetyltransferase 30 (MAK3) from Saccharomyces cerevisiae (strain ATCC 204508 / S288c) (Baker's yeast).